The chain runs to 932 residues: Transcription initiation factor TFIID subunit 3 (932 aa).

Disordered stretches follow at residues 130–201 (PIVS…LSTK), 213–347 (REPL…PSAM), 403–465 (REPD…DNSW), and 480–579 (LGAP…PWRE). Residues 158-171 (LEEDDEMEEEEVIN) are compositionally biased toward acidic residues. Serine 183, serine 199, serine 229, and serine 243 each carry phosphoserine. The residue at position 266 (lysine 266) is an N6-acetyllysine. Over residues 266-283 (KSFTPKTKTKASSPGQKT) the composition is skewed to polar residues. Phosphoserine occurs at positions 291, 297, and 301. Over residues 408-423 (FEFSSGSESEGDTFTS) the composition is skewed to low complexity. Residues 436-446 (KASTSSNNFTK) are compositionally biased toward polar residues. Residues 447 to 461 (SLATPLPLSSGTSSS) show a composition bias toward low complexity. Residue threonine 502 is modified to Phosphothreonine. Residues 505 to 515 (PLHKGYEEKAK) show a composition bias toward basic and acidic residues. Positions 524 to 538 (KKLKKELKTKLKKKE) are enriched in basic residues. A compositionally biased stretch (basic and acidic residues) spans 539–579 (KQRDRERERERNKERSKEKDKMREREKEKEAGKELKYPWRE). Lysine 582 participates in a covalent cross-link: Glycyl lysine isopeptide (Lys-Gly) (interchain with G-Cter in SUMO2). The tract at residues 607–657 (KDGIVRREREKHKDKKKDRERSKREKDKRERERLKEKNREDKIKAPPTQLV) is disordered. Over residues 623 to 650 (KDRERSKREKDKRERERLKEKNREDKIK) the composition is skewed to basic and acidic residues. Position 669 is a phosphoserine (serine 669). The interval 681–746 (AFSPMLPEKL…EKEKEKHKHE (66 aa)) is disordered. The segment covering 689–702 (KLFEEKEKPKEKER) has biased composition (basic and acidic residues). The segment covering 703-714 (KKDKKEKKKKKE) has biased composition (basic residues). The span at 715 to 740 (KEKEKEKKEREREKERREREKREKEK) shows a compositional bias: basic and acidic residues. Residue lysine 749 forms a Glycyl lysine isopeptide (Lys-Gly) (interchain with G-Cter in SUMO2) linkage. Residue serine 758 is modified to Phosphoserine. Lysine 779 is subject to N6-acetyllysine. The segment at 867-917 (IWICPGCNKPDDGSPMIGCDDCDDWYHWPCVGIMAAPPEEMQWFCPKCANK) adopts a PHD-type zinc-finger fold.

Belongs to the TAF3 family. As to quaternary structure, component of the TFIID basal transcription factor complex, composed of TATA-box-binding protein TBP, and a number of TBP-associated factors (TAFs), including TAF1, TAF2, TAF3, TAF4, TAF5, TAF6, TAF7, TAF8, TAF9, TAF10, TAF11, TAF12 and TAF13. Interacts with TAF10 via histone fold. Interacts with TAF13, TBP, SAP130 and GCN5L2. Interacts with TBPL2.

It is found in the nucleus. Its function is as follows. The TFIID basal transcription factor complex plays a major role in the initiation of RNA polymerase II (Pol II)-dependent transcription. TFIID recognizes and binds promoters with or without a TATA box via its subunit TBP, a TATA-box-binding protein, and promotes assembly of the pre-initiation complex (PIC). The TFIID complex consists of TBP and TBP-associated factors (TAFs), including TAF1, TAF2, TAF3, TAF4, TAF5, TAF6, TAF7, TAF8, TAF9, TAF10, TAF11, TAF12 and TAF13. The TFIID complex structure can be divided into 3 modules TFIID-A, TFIID-B, and TFIID-C. TAF3 forms the TFIID-A module together with TAF5 and TBP. Required in complex with TBPL2 for the differentiation of myoblasts into myocytes. The TAF3-TBPL2 complex replaces TFIID at specific promoters at an early stage in the differentiation process. This is Transcription initiation factor TFIID subunit 3 (Taf3) from Mus musculus (Mouse).